Reading from the N-terminus, the 83-residue chain is Cytochrome c-554(548) (83 aa).

4 residues coordinate heme c: C14, C17, H18, and M63.

As to quaternary structure, homodimer. Post-translationally, binds 1 heme c group covalently per subunit.

The protein is Cytochrome c-554(548) of Halomonas halodenitrificans (strain ATCC 12084 / NCIMB 8669) (Paracoccus halodenitrificans).